A 1059-amino-acid chain; its full sequence is Isoleucine--tRNA ligase (1059 aa).

Positions 59-69 (PFANGLPHYGH) match the 'HIGH' region motif. Positions 637–641 (KMSKS) match the 'KMSKS' region motif. Residue K640 participates in ATP binding.

It belongs to the class-I aminoacyl-tRNA synthetase family. IleS type 2 subfamily. As to quaternary structure, monomer. It depends on Zn(2+) as a cofactor.

It is found in the cytoplasm. It catalyses the reaction tRNA(Ile) + L-isoleucine + ATP = L-isoleucyl-tRNA(Ile) + AMP + diphosphate. Functionally, catalyzes the attachment of isoleucine to tRNA(Ile). As IleRS can inadvertently accommodate and process structurally similar amino acids such as valine, to avoid such errors it has two additional distinct tRNA(Ile)-dependent editing activities. One activity is designated as 'pretransfer' editing and involves the hydrolysis of activated Val-AMP. The other activity is designated 'posttransfer' editing and involves deacylation of mischarged Val-tRNA(Ile). This chain is Isoleucine--tRNA ligase, found in Mycobacterium leprae (strain TN).